A 288-amino-acid polypeptide reads, in one-letter code: Probable endonuclease 4 (288 aa).

Zn(2+) is bound by residues histidine 75, histidine 115, glutamate 153, aspartate 187, histidine 190, histidine 224, aspartate 237, histidine 239, and glutamate 269.

This sequence belongs to the AP endonuclease 2 family. Requires Zn(2+) as cofactor.

The catalysed reaction is Endonucleolytic cleavage to 5'-phosphooligonucleotide end-products.. In terms of biological role, endonuclease IV plays a role in DNA repair. It cleaves phosphodiester bonds at apurinic or apyrimidinic (AP) sites, generating a 3'-hydroxyl group and a 5'-terminal sugar phosphate. The chain is Probable endonuclease 4 from Chlamydia muridarum (strain MoPn / Nigg).